The chain runs to 265 residues: Exosome complex component Rrp4 (265 aa).

The S1 motif domain occupies 65–137 (GDNVIGKIVD…EVNNIDLTTK (73 aa)). In terms of domain architecture, KH spans 147–205 (KGGQIVKITPSRVPRVIGRGGSMINMIKKLTMTRIIVGQNGWIWVSGKNDALEKLAIEA). The disordered stretch occupies residues 241–265 (EIPKLEEEPQGEDEVNGNDGEARGA).

This sequence belongs to the RRP4 family. In terms of assembly, component of the archaeal exosome complex. Forms a trimer of Rrp4 and/or Csl4 subunits. The trimer associates with a hexameric ring-like arrangement composed of 3 Rrp41-Rrp42 heterodimers.

The protein resides in the cytoplasm. Functionally, non-catalytic component of the exosome, which is a complex involved in RNA degradation. Increases the RNA binding and the efficiency of RNA degradation. Confers strong poly(A) specificity to the exosome. The polypeptide is Exosome complex component Rrp4 (Pyrococcus abyssi (strain GE5 / Orsay)).